The following is a 147-amino-acid chain: MKYKKKEKEELKKILTEEEYYVTQENGTERPFTNEYWDFNGEGIYVDITTGEPLFTSKDKFHSSCGWPAFSKPIDRSIIKEKVDKSHGMVRTEVRSKLGDSHLGHVFCDGPEELGGLRYCINSASLKFIPKEELKEKGYEEYLELFK.

Positions lysine 8–lysine 131 constitute a MsrB domain. Cysteine 120 functions as the Nucleophile in the catalytic mechanism.

Belongs to the MsrB Met sulfoxide reductase family.

It catalyses the reaction L-methionyl-[protein] + [thioredoxin]-disulfide + H2O = L-methionyl-(R)-S-oxide-[protein] + [thioredoxin]-dithiol. The polypeptide is Peptide methionine sulfoxide reductase MsrB (Clostridium perfringens (strain SM101 / Type A)).